The sequence spans 147 residues: Vasopressin-neurophysin 2-copeptin (147 aa).

A disulfide bridge links Cys1 with Cys6. Gly9 is modified (glycine amide). Intrachain disulfides connect Cys22–Cys66, Cys25–Cys39, Cys33–Cys56, Cys40–Cys46, Cys73–Cys85, Cys79–Cys97, and Cys86–Cys91. An N-linked (GlcNAc...) asparagine glycan is attached at Asn114.

It belongs to the vasopressin/oxytocin family. As to quaternary structure, interacts with vasopressin receptors V1bR/AVPR1B (Ki=85 pM), V1aR/AVPR1A (Ki=0.6 nM) and V2R/AVPR2 (Ki=4.9 nM). Interacts with oxytocin receptor (OXTR) (Ki=110 nM).

It is found in the secreted. Its function is as follows. Neurophysin 2 specifically binds vasopressin. Vasopressin has a direct antidiuretic action on the kidney, it also causes vasoconstriction of the peripheral vessels. Acts by binding to vasopressin receptors (V1bR/AVPR1B, V1aR/AVPR1A, and V2R/AVPR2). The chain is Vasopressin-neurophysin 2-copeptin (AVP) from Ovis aries (Sheep).